We begin with the raw amino-acid sequence, 43 residues long: Iota-conotoxin-like Fi11.6 (43 aa).

Disulfide bonds link Cys2-Cys16, Cys9-Cys19, Cys15-Cys24, and Cys18-Cys35. Pro8 carries the 4-hydroxyproline modification. A 4-hydroxyproline modification is found at Pro26. The residue at position 30 (Trp30) is a 6'-bromotryptophan. The residue at position 41 (Phe41) is a D-phenylalanine.

This sequence belongs to the conotoxin I1 superfamily. Expressed by the venom duct.

It is found in the secreted. Iota-conotoxins bind to voltage-gated sodium channels (Nav) and act as agonists by shifting the voltage-dependence of activation to more hyperpolarized levels. Produces general excitatory symptoms. The sequence is that of Iota-conotoxin-like Fi11.6 from Conus figulinus (Fig cone).